The chain runs to 362 residues: tRNA/tmRNA (uracil-C(5))-methyltransferase (362 aa).

Residues Gln-182, Tyr-210, Asn-215, Glu-231, and Asp-293 each coordinate S-adenosyl-L-methionine. The active-site Nucleophile is the Cys-318. The active-site Proton acceptor is the Glu-352.

The protein belongs to the class I-like SAM-binding methyltransferase superfamily. RNA M5U methyltransferase family. TrmA subfamily.

The enzyme catalyses uridine(54) in tRNA + S-adenosyl-L-methionine = 5-methyluridine(54) in tRNA + S-adenosyl-L-homocysteine + H(+). The catalysed reaction is uridine(341) in tmRNA + S-adenosyl-L-methionine = 5-methyluridine(341) in tmRNA + S-adenosyl-L-homocysteine + H(+). Dual-specificity methyltransferase that catalyzes the formation of 5-methyluridine at position 54 (m5U54) in all tRNAs, and that of position 341 (m5U341) in tmRNA (transfer-mRNA). The sequence is that of tRNA/tmRNA (uracil-C(5))-methyltransferase from Neisseria gonorrhoeae (strain ATCC 700825 / FA 1090).